The following is a 393-amino-acid chain: NAD(P)H-quinone oxidoreductase subunit H, chloroplastic (393 aa).

The protein belongs to the complex I 49 kDa subunit family. NDH is composed of at least 16 different subunits, 5 of which are encoded in the nucleus.

Its subcellular location is the plastid. It is found in the chloroplast thylakoid membrane. The catalysed reaction is a plastoquinone + NADH + (n+1) H(+)(in) = a plastoquinol + NAD(+) + n H(+)(out). It carries out the reaction a plastoquinone + NADPH + (n+1) H(+)(in) = a plastoquinol + NADP(+) + n H(+)(out). Its function is as follows. NDH shuttles electrons from NAD(P)H:plastoquinone, via FMN and iron-sulfur (Fe-S) centers, to quinones in the photosynthetic chain and possibly in a chloroplast respiratory chain. The immediate electron acceptor for the enzyme in this species is believed to be plastoquinone. Couples the redox reaction to proton translocation, and thus conserves the redox energy in a proton gradient. This is NAD(P)H-quinone oxidoreductase subunit H, chloroplastic from Barbarea verna (Land cress).